The sequence spans 863 residues: Alanine--tRNA ligase (863 aa).

Zn(2+) is bound by residues H552, H556, C654, and H658.

It belongs to the class-II aminoacyl-tRNA synthetase family. Zn(2+) is required as a cofactor.

Its subcellular location is the cytoplasm. The enzyme catalyses tRNA(Ala) + L-alanine + ATP = L-alanyl-tRNA(Ala) + AMP + diphosphate. Its function is as follows. Catalyzes the attachment of alanine to tRNA(Ala) in a two-step reaction: alanine is first activated by ATP to form Ala-AMP and then transferred to the acceptor end of tRNA(Ala). Also edits incorrectly charged Ser-tRNA(Ala) and Gly-tRNA(Ala) via its editing domain. The chain is Alanine--tRNA ligase from Nitrosomonas eutropha (strain DSM 101675 / C91 / Nm57).